Consider the following 160-residue polypeptide: Myosin regulatory light chain, smooth muscle (160 aa).

Ser-1 carries the post-translational modification Blocked amino end (Ser). Ser-11 bears the Phosphoserine mark. 2 EF-hand domains span residues 20 to 55 (NQIQEMKEAFTMIDQNRDGLIDVSDLKEMYSNLGTA) and 88 to 123 (DPEETLRNAFQMFDSDNTGYIPEEYMKDLLENMGDN). Ca(2+) is bound by residues Asp-33, Asn-35, Asp-37, and Asp-44.

In molluscan muscle, calcium regulation is associated with myosin rather than with actin. Muscle myosin contains two types of light chains: the catalytic light chain, essential for ATPase activity, and the regulatory light chain, a calcium-binding protein responsible for Ca(2+) dependent binding and Ca(2+) dependent Mg-ATPase activity. The sequence is that of Myosin regulatory light chain, smooth muscle from Spisula sachalinensis (Sakhalin surf-clam).